A 262-amino-acid polypeptide reads, in one-letter code: Transcription factor Spi-B (262 aa).

The TAD1 (Acidic) stretch occupies residues 1–31 (MLALEAAQLDGPHFSCLYPDGVFYDLDSCKH). The TAD2 stretch occupies residues 41 to 61 (PDSLWDWTVAPPVPATPYEAF). A disordered region spans residues 140–163 (ALEVSDSESDEALVAGPEGKGSEA). A DNA-binding region (ETS) is located at residues 169 to 252 (LRLYQFLLGL…VKRKLTYQFD (84 aa)).

It belongs to the ETS family. Can form homotypic interactions. Interacts with IRF4/Pip. Interacts with JUN. Interacts with TBP. May also interact with CREBBP and EP300. Interacts with NONO/p54(nrb). Expressed in plasmacytoid dendritic cells (pDCs) and B-cells, not expressed in T-cells or granulocytes. May also be enriched in stem cell populations of the liver.

It localises to the nucleus. The protein resides in the cytoplasm. Sequence specific transcriptional activator which binds to the PU-box, a purine-rich DNA sequence (5'-GAGGAA-3') that can act as a lymphoid-specific enhancer. Promotes development of plasmacytoid dendritic cells (pDCs), also known as type 2 DC precursors (pre-DC2) or natural interferon (IFN)-producing cells. These cells have the capacity to produce large amounts of interferon and block viral replication. May be required for B-cell receptor (BCR) signaling, which is necessary for normal B-cell development and antigenic stimulation. This is Transcription factor Spi-B (SPIB) from Homo sapiens (Human).